The chain runs to 508 residues: UTP--glucose-1-phosphate uridylyltransferase (508 aa).

Ser13 bears the Phosphoserine mark. Residues Leu113–Gly116, Lys127, Gln190, and Gly222 each bind UTP. Gly115 to Gly116 is a binding site for substrate. Residue Lys127 participates in Mg(2+) binding. Substrate-binding positions include His223 and Asn251–Asp253. UTP is bound by residues Asp253 and Lys396. Asp253 is a Mg(2+) binding site. Lys396 is an active-site residue. Phosphothreonine is present on Thr426. Position 434 is a phosphoserine (Ser434). The residue at position 438 (Lys438) is an N6-acetyllysine. Phosphoserine is present on residues Ser448 and Ser461. An oligomerization region spans residues His457–His508. Residues Asn502 to Leu503 are critical for end-to-end subunit interaction.

Belongs to the UDPGP type 1 family. In terms of assembly, homooctamer.

It is found in the cytoplasm. It carries out the reaction alpha-D-glucose 1-phosphate + UTP + H(+) = UDP-alpha-D-glucose + diphosphate. It functions in the pathway glycan biosynthesis; glycogen biosynthesis. In terms of biological role, UTP--glucose-1-phosphate uridylyltransferase catalyzing the conversion of glucose-1-phosphate into UDP-glucose, a crucial precursor for the production of glycogen. The protein is UTP--glucose-1-phosphate uridylyltransferase (Ugp2) of Mus musculus (Mouse).